Reading from the N-terminus, the 106-residue chain is NADH dehydrogenase [ubiquinone] iron-sulfur protein 5 (106 aa).

Residues 30–74 enclose the CHCH domain; it reads PSRCHAFEKEWIECAHGIGSIRAEKECKIEFEDFRECLLRQKTMK. 2 consecutive short sequence motifs (cx9C motif) follow at residues 33 to 43 and 56 to 66; these read CHAFEKEWIEC and CKIEFEDFREC. Disulfide bonds link C33/C66 and C43/C56. Residues 84–106 are disordered; that stretch reads EKLIKEGKYTPPPHHSGQEEPRS.

The protein belongs to the complex I NDUFS5 subunit family. In terms of assembly, mammalian complex I is composed of 45 different subunits. This is a component of the iron-sulfur (IP) fragment of the enzyme.

The protein localises to the mitochondrion inner membrane. Its subcellular location is the mitochondrion intermembrane space. Accessory subunit of the mitochondrial membrane respiratory chain NADH dehydrogenase (Complex I), that is believed not to be involved in catalysis. Complex I functions in the transfer of electrons from NADH to the respiratory chain. The immediate electron acceptor for the enzyme is believed to be ubiquinone. This Bos taurus (Bovine) protein is NADH dehydrogenase [ubiquinone] iron-sulfur protein 5 (NDUFS5).